A 139-amino-acid polypeptide reads, in one-letter code: uncharacterized protein (139 aa).

The helical transmembrane segment at 43–59 threads the bilayer; it reads FGVISTLIAIFIGAFWL.

The protein resides in the membrane. This is an uncharacterized protein from Haemophilus influenzae (strain ATCC 51907 / DSM 11121 / KW20 / Rd).